The sequence spans 312 residues: Methionyl-tRNA formyltransferase (312 aa).

112–115 serves as a coordination point for (6S)-5,6,7,8-tetrahydrofolate; it reads SLLP.

Belongs to the Fmt family.

The catalysed reaction is L-methionyl-tRNA(fMet) + (6R)-10-formyltetrahydrofolate = N-formyl-L-methionyl-tRNA(fMet) + (6S)-5,6,7,8-tetrahydrofolate + H(+). Functionally, attaches a formyl group to the free amino group of methionyl-tRNA(fMet). The formyl group appears to play a dual role in the initiator identity of N-formylmethionyl-tRNA by promoting its recognition by IF2 and preventing the misappropriation of this tRNA by the elongation apparatus. The chain is Methionyl-tRNA formyltransferase from Syntrophus aciditrophicus (strain SB).